The following is a 510-amino-acid chain: NAD(P)H-quinone oxidoreductase subunit 2 B, chloroplastic (510 aa).

Helical transmembrane passes span 24 to 44 (LLLF…GLIL), 57 to 77 (IPWL…SLLF), 99 to 119 (IFQF…VEYI), 124 to 144 (MAIT…MFLC), 149 to 169 (LITI…LSGY), 183 to 203 (YLLM…WLYG), 227 to 247 (PGIS…LSPA), 295 to 315 (WHLL…LIAI), 323 to 343 (MLAY…IVGD), 354 to 374 (YMLF…LFGL), 395 to 415 (ALSL…AGFF), 418 to 438 (LYLF…IGLL), and 484 to 504 (MIVC…IIAI).

This sequence belongs to the complex I subunit 2 family. As to quaternary structure, NDH is composed of at least 16 different subunits, 5 of which are encoded in the nucleus.

The protein localises to the plastid. It is found in the chloroplast thylakoid membrane. It carries out the reaction a plastoquinone + NADH + (n+1) H(+)(in) = a plastoquinol + NAD(+) + n H(+)(out). The enzyme catalyses a plastoquinone + NADPH + (n+1) H(+)(in) = a plastoquinol + NADP(+) + n H(+)(out). Its function is as follows. NDH shuttles electrons from NAD(P)H:plastoquinone, via FMN and iron-sulfur (Fe-S) centers, to quinones in the photosynthetic chain and possibly in a chloroplast respiratory chain. The immediate electron acceptor for the enzyme in this species is believed to be plastoquinone. Couples the redox reaction to proton translocation, and thus conserves the redox energy in a proton gradient. The protein is NAD(P)H-quinone oxidoreductase subunit 2 B, chloroplastic of Lactuca sativa (Garden lettuce).